The chain runs to 560 residues: Glycolate permease GlcA (560 aa).

At 1-13 the chain is on the cytoplasmic side; that stretch reads MVTWTQMYMPMGG. Residues 14–34 traverse the membrane as a helical segment; sequence LGLSALVALIPIIFFFVALAV. Over 35-41 the chain is Periplasmic; it reads LRLKGHV. A helical membrane pass occupies residues 42–62; sequence AGAITLILSILIAIFAFKMPI. Over 63–69 the chain is Cytoplasmic; it reads DMAFAAA. A helical transmembrane segment spans residues 70–90; that stretch reads GYGFIYGLWPIAWIIVAAVFL. Residues 91-130 lie on the Periplasmic side of the membrane; it reads YKLTVASGQFDIIRSSVISITDDQRLQVLLIGFSFGALLE. A helical membrane pass occupies residues 131–151; sequence GAAGFGAPVAITGALLVGLGF. The Cytoplasmic portion of the chain corresponds to 152 to 158; the sequence is KPLYAAG. The chain crosses the membrane as a helical span at residues 159–179; sequence LCLIANTAPVAFGALGVPILV. Residues 180–199 are Periplasmic-facing; sequence AGQVTGIDPFHIGAMAGRQL. Residues 200 to 220 form a helical membrane-spanning segment; the sequence is PFLSVLVPFWLVAMMDGWKGV. Residues 221–225 lie on the Cytoplasmic side of the membrane; sequence KETWP. A helical transmembrane segment spans residues 226 to 246; it reads AALVAGGSFAVTQFFTSNYIG. Residues 247–248 lie on the Periplasmic side of the membrane; it reads PE. A helical membrane pass occupies residues 249–269; that stretch reads LPDITSALVSIVSLALFLKVW. Residues 270 to 313 are Cytoplasmic-facing; it reads RPKNTETAISMGQSAGAMVVNKPSSGGPVPSEYSLGQIIRAWSP. The chain crosses the membrane as a helical span at residues 314–334; sequence FLILTVLVTIWTMKPFKALFA. Residues 335–378 lie on the Periplasmic side of the membrane; sequence PGGAFYSLVINFQIPHLHQQVLKAAPIVAQPTPMDAVFKFDPLS. The chain crosses the membrane as a helical span at residues 379-399; sequence AGGTAIFIAAIISIFILGVGI. Over 400-408 the chain is Cytoplasmic; sequence KKGIGVFAE. A helical transmembrane segment spans residues 409-429; that stretch reads TLISLKWPILSIGMVLAFAFV. The Periplasmic portion of the chain corresponds to 430–438; it reads TNYSGMSTT. Residues 439 to 459 traverse the membrane as a helical segment; it reads LALVLAGTGVMFPFFSPFLGW. At 460 to 536 the chain is on the cytoplasmic side; it reads LGVFLTGSDT…ELFRYTVKHS (77 aa). The helical transmembrane segment at 537 to 557 threads the bilayer; it reads LIFASVIGIITLLQAYVFTGM. The Periplasmic portion of the chain corresponds to 558 to 560; it reads LVS.

Belongs to the lactate permease family.

It is found in the cell inner membrane. It carries out the reaction glycolate(in) + H(+)(in) = glycolate(out) + H(+)(out). It catalyses the reaction (S)-lactate(in) + H(+)(in) = (S)-lactate(out) + H(+)(out). The catalysed reaction is (R)-lactate(in) + H(+)(in) = (R)-lactate(out) + H(+)(out). Inhibited by the proton ionophore carbonyl cyanide m-chlorophenylhydrazone (CCCP). Functionally, uptake of glycolate across the membrane. Can also transport L-lactate and D-lactate. Seems to be driven by a proton motive force. The sequence is that of Glycolate permease GlcA from Escherichia coli (strain K12).